Here is a 120-residue protein sequence, read N- to C-terminus: Small ribosomal subunit protein bS6 (120 aa).

Polar residues predominate over residues 97–112 (SNEPSPILKNQSTENT). A disordered region spans residues 97–120 (SNEPSPILKNQSTENTPVIDVTAN).

This sequence belongs to the bacterial ribosomal protein bS6 family.

Its function is as follows. Binds together with bS18 to 16S ribosomal RNA. The polypeptide is Small ribosomal subunit protein bS6 (Rickettsia bellii (strain RML369-C)).